Reading from the N-terminus, the 930-residue chain is Protein translocase subunit SecA (930 aa).

ATP-binding positions include Q83, 101–105, and D491; that span reads GEGKT.

This sequence belongs to the SecA family. In terms of assembly, monomer and homodimer. Part of the essential Sec protein translocation apparatus which comprises SecA, SecYEG and auxiliary proteins SecDF. Other proteins may also be involved.

The protein localises to the cell inner membrane. Its subcellular location is the cellular thylakoid membrane. It is found in the cytoplasm. The enzyme catalyses ATP + H2O + cellular proteinSide 1 = ADP + phosphate + cellular proteinSide 2.. Part of the Sec protein translocase complex. Interacts with the SecYEG preprotein conducting channel. Has a central role in coupling the hydrolysis of ATP to the transfer of proteins into and across the cell membrane, serving as an ATP-driven molecular motor driving the stepwise translocation of polypeptide chains across the membrane. In terms of biological role, probably participates in protein translocation into and across both the cytoplasmic and thylakoid membranes in cyanobacterial cells. The sequence is that of Protein translocase subunit SecA from Nostoc sp. (strain PCC 7120 / SAG 25.82 / UTEX 2576).